We begin with the raw amino-acid sequence, 144 residues long: D-aminoacyl-tRNA deacylase (144 aa).

The Gly-cisPro motif, important for rejection of L-amino acids motif lies at 136 to 137 (GP).

This sequence belongs to the DTD family. Homodimer.

The protein localises to the cytoplasm. It catalyses the reaction glycyl-tRNA(Ala) + H2O = tRNA(Ala) + glycine + H(+). The enzyme catalyses a D-aminoacyl-tRNA + H2O = a tRNA + a D-alpha-amino acid + H(+). Its function is as follows. An aminoacyl-tRNA editing enzyme that deacylates mischarged D-aminoacyl-tRNAs. Also deacylates mischarged glycyl-tRNA(Ala), protecting cells against glycine mischarging by AlaRS. Acts via tRNA-based rather than protein-based catalysis; rejects L-amino acids rather than detecting D-amino acids in the active site. By recycling D-aminoacyl-tRNA to D-amino acids and free tRNA molecules, this enzyme counteracts the toxicity associated with the formation of D-aminoacyl-tRNA entities in vivo and helps enforce protein L-homochirality. In Haemophilus influenzae (strain 86-028NP), this protein is D-aminoacyl-tRNA deacylase.